We begin with the raw amino-acid sequence, 277 residues long: NAD kinase (277 aa).

Catalysis depends on D67, which acts as the Proton acceptor. Residues 67–68 (DG), R72, 137–138 (NE), K148, R165, D167, 178–183 (TGYAMS), L202, and Q236 each bind NAD(+).

It belongs to the NAD kinase family. The cofactor is a divalent metal cation.

It localises to the cytoplasm. The catalysed reaction is NAD(+) + ATP = ADP + NADP(+) + H(+). Its function is as follows. Involved in the regulation of the intracellular balance of NAD and NADP, and is a key enzyme in the biosynthesis of NADP. Catalyzes specifically the phosphorylation on 2'-hydroxyl of the adenosine moiety of NAD to yield NADP. The sequence is that of NAD kinase from Pyrococcus furiosus (strain ATCC 43587 / DSM 3638 / JCM 8422 / Vc1).